The chain runs to 242 residues: Small ribosomal subunit protein uS2 (242 aa).

This sequence belongs to the universal ribosomal protein uS2 family.

The protein is Small ribosomal subunit protein uS2 of Neisseria meningitidis serogroup B (strain ATCC BAA-335 / MC58).